The chain runs to 122 residues: Acidic phospholipase A2 Tpu-E6c (122 aa).

7 cysteine pairs are disulfide-bonded: Cys26/Cys115, Cys28/Cys44, Cys43/Cys95, Cys49/Cys122, Cys50/Cys88, Cys57/Cys81, and Cys75/Cys86. Ca(2+) is bound by residues Tyr27, Gly29, and Gly31. Residue His47 is part of the active site. Asp48 provides a ligand contact to Ca(2+). Residue Asp89 is part of the active site.

As to quaternary structure, monomer. The cofactor is Ca(2+). In terms of tissue distribution, expressed by the venom gland.

Its subcellular location is the secreted. It carries out the reaction a 1,2-diacyl-sn-glycero-3-phosphocholine + H2O = a 1-acyl-sn-glycero-3-phosphocholine + a fatty acid + H(+). Snake venom phospholipase A2 (PLA2) that impairs hemostasis. It weakly inhibits ADP-induced platelet aggregation when tested on platelet rich plasma from human and rabbit blood (15-25% of inhibition at 5-10 ug of enzyme), and dose-dependently inhibits blood coagulation, possibly by inhibiting thrombin activation. Exhibits high hydrolytic activities toward L-dipalmitoyl phosphatidylcholine. PLA2 catalyzes the calcium-dependent hydrolysis of the 2-acyl groups in 3-sn-phosphoglycerides. The sequence is that of Acidic phospholipase A2 Tpu-E6c from Craspedocephalus puniceus (Flat-nosed pitviper).